Reading from the N-terminus, the 327-residue chain is Mitochondrial substrate carrier family protein A (327 aa).

Positions 1 to 36 (MVINNQNNNNQNNNQNNNNKNDNLNNSTTTTTTTAT) are disordered. Over 1 to 48 (MVINNQNNNNQNNNQNNNNKNDNLNNSTTTTTTTATTTKSSTLFHSND) the chain is Mitochondrial intermembrane. 3 Solcar repeats span residues 43–132 (LFHS…FKRM), 140–224 (ISVI…IKEK), and 233–323 (PPLY…AITL). A helical membrane pass occupies residues 49–66 (FFSGLIAGIVSRTLTAPL). The Mitochondrial matrix segment spans residues 67 to 106 (ERIKILNQVEVILKDGTKYNRIIPAFKVIIKEEGIAGLFR). A helical transmembrane segment spans residues 107–127 (GNFVNIIKAGPQSAIRFYSYG). Over 128–145 (AFKRMASEPDGSISVINR) the chain is Mitochondrial intermembrane. The chain crosses the membrane as a helical span at residues 146–166 (MWAGASSGVVSVALTHPLDVI). Residues 167–192 (KTHITVIAPTAATIKNVTKGIYRDLG) are Mitochondrial matrix-facing. Residues 193–213 (IIGFFRGLSAGILNIAPFAAL) form a helical membrane-spanning segment. The Mitochondrial intermembrane segment spans residues 214–238 (NFTFYETIKEKTQQYILKSPPLYAP). A helical membrane pass occupies residues 239–259 (SIYGAISGGLTMTILYPLDVV). At 260 to 303 (KRRIMLQHFDRNQLPIYKNFIDAIIKITKTEGISALYKGIRPAY) the chain is on the mitochondrial matrix side. The helical transmembrane segment at 304–324 (LKVIPTVSINFLIYEGAITLF) threads the bilayer. Over 325 to 327 (EKK) the chain is Mitochondrial intermembrane.

Belongs to the mitochondrial carrier (TC 2.A.29) family.

The protein localises to the mitochondrion inner membrane. Calcium-dependent mitochondrial solute carrier. Mitochondrial solute carriers shuttle metabolites, nucleotides, and cofactors through the mitochondrial inner membrane. This is Mitochondrial substrate carrier family protein A (mcfA) from Dictyostelium discoideum (Social amoeba).